A 311-amino-acid chain; its full sequence is Aspartate carbamoyltransferase catalytic subunit (311 aa).

Arg-59 and Thr-60 together coordinate carbamoyl phosphate. Lys-87 provides a ligand contact to L-aspartate. The carbamoyl phosphate site is built by Arg-109, His-139, and Gln-142. The L-aspartate site is built by Arg-172 and Arg-224. The carbamoyl phosphate site is built by Ala-265 and Pro-266.

It belongs to the aspartate/ornithine carbamoyltransferase superfamily. ATCase family. In terms of assembly, heterododecamer (2C3:3R2) of six catalytic PyrB chains organized as two trimers (C3), and six regulatory PyrI chains organized as three dimers (R2).

The enzyme catalyses carbamoyl phosphate + L-aspartate = N-carbamoyl-L-aspartate + phosphate + H(+). It participates in pyrimidine metabolism; UMP biosynthesis via de novo pathway; (S)-dihydroorotate from bicarbonate: step 2/3. Its function is as follows. Catalyzes the condensation of carbamoyl phosphate and aspartate to form carbamoyl aspartate and inorganic phosphate, the committed step in the de novo pyrimidine nucleotide biosynthesis pathway. This chain is Aspartate carbamoyltransferase catalytic subunit, found in Streptococcus pyogenes serotype M4 (strain MGAS10750).